The chain runs to 371 residues: tRNA-specific 2-thiouridylase MnmA (371 aa).

Residues 14–21 (GMSGGVDS) and M40 each bind ATP. Residues 100–102 (NPD) form an interaction with target base in tRNA region. C105 functions as the Nucleophile in the catalytic mechanism. C105 and C201 are joined by a disulfide. Position 129 (G129) interacts with ATP. Residues 151 to 153 (KDQ) are interaction with tRNA. The Cysteine persulfide intermediate role is filled by C201. Residues 309–310 (RY) are interaction with tRNA.

Belongs to the MnmA/TRMU family.

It is found in the cytoplasm. It carries out the reaction S-sulfanyl-L-cysteinyl-[protein] + uridine(34) in tRNA + AH2 + ATP = 2-thiouridine(34) in tRNA + L-cysteinyl-[protein] + A + AMP + diphosphate + H(+). Catalyzes the 2-thiolation of uridine at the wobble position (U34) of tRNA, leading to the formation of s(2)U34. This Halalkalibacterium halodurans (strain ATCC BAA-125 / DSM 18197 / FERM 7344 / JCM 9153 / C-125) (Bacillus halodurans) protein is tRNA-specific 2-thiouridylase MnmA.